The primary structure comprises 531 residues: Probable peptide ABC transporter periplasmic-binding protein y4tO (531 aa).

Positions 1 to 32 (MTISRRDLFKAGLAAGAALSVPSLLRAQTAVA) form a signal peptide, tat-type signal.

Belongs to the bacterial solute-binding protein 5 family. Post-translationally, predicted to be exported by the Tat system. The position of the signal peptide cleavage has not been experimentally proven.

Its subcellular location is the periplasm. In terms of biological role, probably part of the binding-protein-dependent transport system y4tOPQRS for a peptide. The sequence is that of Probable peptide ABC transporter periplasmic-binding protein y4tO from Sinorhizobium fredii (strain NBRC 101917 / NGR234).